Consider the following 138-residue polypeptide: Small ribosomal subunit protein uS11c (138 aa).

Residues M1–R24 form a disordered region. Positions G9–R24 are enriched in basic residues.

The protein belongs to the universal ribosomal protein uS11 family. Part of the 30S ribosomal subunit.

Its subcellular location is the plastid. It is found in the chloroplast. This Chloranthus spicatus (Chulantree) protein is Small ribosomal subunit protein uS11c.